We begin with the raw amino-acid sequence, 308 residues long: Putative cathepsin L 3 (308 aa).

Positions 1–21 are cleaved as a signal peptide; it reads MKQFLTAAIVTLLMTAGYYHL. A propeptide spans 22–110 (activation peptide); that stretch reads QEDDTNDFER…GASLPEVQLE (89 aa). 2 disulfides stabilise this stretch: Cys-129–Cys-170 and Cys-254–Cys-298. Residues His-261 and Asn-278 contribute to the active site.

Belongs to the peptidase C1 family.

The protein resides in the secreted. It carries out the reaction Specificity close to that of papain. As compared to cathepsin B, cathepsin L exhibits higher activity toward protein substrates, but has little activity on Z-Arg-Arg-NHMec, and no peptidyl-dipeptidase activity.. Functionally, may be involved in extracellular digestion. The chain is Putative cathepsin L 3 from Paramecium tetraurelia.